The sequence spans 187 residues: Protein dj-1beta (187 aa).

Cys45 carries the cysteine sulfinic acid (-SO2H) modification. The active-site Nucleophile is Cys104. Cys104 is subject to Cysteine sulfinic acid (-SO2H); alternate.

In terms of processing, oxidation of Cys-45 and Cys-104 in response to oxidative stress. Levels of oxidation increase with age. As to expression, expressed in the head and testis (at protein level). Ubiquitously expressed at constant levels.

It is found in the mitochondrion. The protein localises to the cytoplasm. It localises to the nucleus. Functionally, plays an important role in cell protection against oxidative stress and cell death by acting as a oxidative stress sensor. Does not play a role in methylglyoxal detoxification. Plays a role in mitochondrial function together with Pink1. In motor neurons regulates structural synaptic plasticity of locomotor behavior as part of the PTEN-phosphatidylinositol 3-kinase pathway in response to oxygen species (ROS) levels. The chain is Protein dj-1beta from Drosophila melanogaster (Fruit fly).